The primary structure comprises 397 residues: Acetate kinase 1 (397 aa).

A Mg(2+)-binding site is contributed by Asn8. Lys15 contributes to the ATP binding site. Residue Arg89 participates in substrate binding. Asp146 (proton donor/acceptor) is an active-site residue. ATP contacts are provided by residues 206 to 210 (HLGNG), 281 to 283 (DLR), and 329 to 333 (GIGEN). A Mg(2+)-binding site is contributed by Glu382.

The protein belongs to the acetokinase family. In terms of assembly, homodimer. Mg(2+) is required as a cofactor. The cofactor is Mn(2+).

It is found in the cytoplasm. The enzyme catalyses acetate + ATP = acetyl phosphate + ADP. The protein operates within metabolic intermediate biosynthesis; acetyl-CoA biosynthesis; acetyl-CoA from acetate: step 1/2. In terms of biological role, catalyzes the formation of acetyl phosphate from acetate and ATP. Can also catalyze the reverse reaction. The sequence is that of Acetate kinase 1 from Listeria monocytogenes serovar 1/2a (strain ATCC BAA-679 / EGD-e).